A 274-amino-acid chain; its full sequence is Ribosomal RNA small subunit methyltransferase A (274 aa).

Residues His15, Leu17, Gly42, Glu64, Asp89, and Asn108 each coordinate S-adenosyl-L-methionine.

This sequence belongs to the class I-like SAM-binding methyltransferase superfamily. rRNA adenine N(6)-methyltransferase family. RsmA subfamily.

It localises to the cytoplasm. The enzyme catalyses adenosine(1518)/adenosine(1519) in 16S rRNA + 4 S-adenosyl-L-methionine = N(6)-dimethyladenosine(1518)/N(6)-dimethyladenosine(1519) in 16S rRNA + 4 S-adenosyl-L-homocysteine + 4 H(+). Specifically dimethylates two adjacent adenosines (A1518 and A1519) in the loop of a conserved hairpin near the 3'-end of 16S rRNA in the 30S particle. May play a critical role in biogenesis of 30S subunits. In Prochlorococcus marinus (strain MIT 9215), this protein is Ribosomal RNA small subunit methyltransferase A.